Reading from the N-terminus, the 494-residue chain is Alpha-amylase 2 (494 aa).

An N-terminal signal peptide occupies residues 1 to 18; it reads MFLAKSIVCLALLAVANA. An intrachain disulfide couples cysteine 46 to cysteine 102. Residues asparagine 116, arginine 165, and aspartate 174 each coordinate Ca(2+). A disulfide bond links cysteine 153 and cysteine 167. Residue arginine 202 participates in chloride binding. The Nucleophile role is filled by aspartate 204. Residue histidine 208 participates in Ca(2+) binding. Glutamate 241 functions as the Proton donor in the catalytic mechanism. Residues asparagine 304 and arginine 343 each contribute to the chloride site. A disordered region spans residues 350–370; sequence FTDTDQGPPTTDGQNIASPSF. The span at 351–363 shows a compositional bias: low complexity; that stretch reads TDTDQGPPTTDGQ. 2 cysteine pairs are disulfide-bonded: cysteine 376–cysteine 382 and cysteine 448–cysteine 460.

This sequence belongs to the glycosyl hydrolase 13 family. As to quaternary structure, monomer. It depends on Ca(2+) as a cofactor. Chloride serves as cofactor.

The enzyme catalyses Endohydrolysis of (1-&gt;4)-alpha-D-glucosidic linkages in polysaccharides containing three or more (1-&gt;4)-alpha-linked D-glucose units.. The sequence is that of Alpha-amylase 2 (Amy58) from Drosophila ananassae (Fruit fly).